The primary structure comprises 319 residues: tRNA uridine(34) hydroxylase (319 aa).

The region spanning 127-221 is the Rhodanese domain; the sequence is KQEDTVIIDA…YGKDPEVQGE (95 aa). Cys-181 serves as the catalytic Cysteine persulfide intermediate.

This sequence belongs to the TrhO family.

The catalysed reaction is uridine(34) in tRNA + AH2 + O2 = 5-hydroxyuridine(34) in tRNA + A + H2O. Functionally, catalyzes oxygen-dependent 5-hydroxyuridine (ho5U) modification at position 34 in tRNAs. The protein is tRNA uridine(34) hydroxylase of Bacillus mycoides (strain KBAB4) (Bacillus weihenstephanensis).